The chain runs to 146 residues: Small ribosomal subunit protein bS16 (146 aa).

Positions 119–146 (GSENKGGKSKKAEEKSAEKTAEKSEGEA) are disordered. Positions 128–146 (KKAEEKSAEKTAEKSEGEA) are enriched in basic and acidic residues.

It belongs to the bacterial ribosomal protein bS16 family.

This Thermobifida fusca (strain YX) protein is Small ribosomal subunit protein bS16.